Here is a 714-residue protein sequence, read N- to C-terminus: P-loop NTPase domain-containing protein LPA1 (714 aa).

Low complexity predominate over residues 1-11 (MPMPPQCASSK). Disordered regions lie at residues 1–42 (MPMP…PPPK), 259–293 (QKLD…PRTE), and 595–689 (FGSE…GSGN). The segment covering 271 to 285 (EGRDDTSDDKAHHGS) has biased composition (basic and acidic residues). The span at 595–617 (FGSEEDADDPPDAGTDEDLTDEE) shows a compositional bias: acidic residues. Positions 618 to 636 (RDMHEIEAGSVDEHSTKSD) are enriched in basic and acidic residues. Polar residues predominate over residues 659 to 670 (AASSTKNSSNQE).

As to expression, expressed in roots, leaf blade shoots, leaf sheath shoots and panicles.

Required for the accumulation of phytic acid in seeds. Phytic acid is the primary storage form of phosphorus in cereal grains and other plant seeds. The sequence is that of P-loop NTPase domain-containing protein LPA1 from Oryza sativa subsp. japonica (Rice).